The primary structure comprises 188 residues: Elongation factor P (188 aa).

Lys-34 is modified (N6-(3,6-diaminohexanoyl)-5-hydroxylysine).

Belongs to the elongation factor P family. Post-translationally, may be beta-lysylated on the epsilon-amino group of Lys-34 by the combined action of EpmA and EpmB, and then hydroxylated on the C5 position of the same residue by EpmC (if this protein is present). Lysylation is critical for the stimulatory effect of EF-P on peptide-bond formation. The lysylation moiety may extend toward the peptidyltransferase center and stabilize the terminal 3-CCA end of the tRNA. Hydroxylation of the C5 position on Lys-34 may allow additional potential stabilizing hydrogen-bond interactions with the P-tRNA.

It localises to the cytoplasm. Its pathway is protein biosynthesis; polypeptide chain elongation. Involved in peptide bond synthesis. Alleviates ribosome stalling that occurs when 3 or more consecutive Pro residues or the sequence PPG is present in a protein, possibly by augmenting the peptidyl transferase activity of the ribosome. Modification of Lys-34 is required for alleviation. The chain is Elongation factor P from Vibrio parahaemolyticus serotype O3:K6 (strain RIMD 2210633).